A 164-amino-acid polypeptide reads, in one-letter code: Phosphopantetheine adenylyltransferase (164 aa).

The protein belongs to the eukaryotic CoaD family.

It is found in the cytoplasm. It carries out the reaction (R)-4'-phosphopantetheine + ATP + H(+) = 3'-dephospho-CoA + diphosphate. The protein operates within cofactor biosynthesis; coenzyme A biosynthesis. Reversibly transfers an adenylyl group from ATP to 4'-phosphopantetheine, yielding dephospho-CoA (dPCoA) and pyrophosphate. The protein is Phosphopantetheine adenylyltransferase of Methanothermobacter thermautotrophicus (strain ATCC 29096 / DSM 1053 / JCM 10044 / NBRC 100330 / Delta H) (Methanobacterium thermoautotrophicum).